We begin with the raw amino-acid sequence, 468 residues long: Protein C-ets-2 (468 aa).

The PNT domain occupies 85-170 (ATFSGFQKEQ…EHLEQMIKEN (86 aa)). 2 positions are modified to phosphoserine: Ser220 and Ser225. The disordered stretch occupies residues 262-290 (VNLLNNNSGKPKDHDSPENGGDSFESSDS). Residues Ser294, Ser297, and Ser300 each carry the phosphoserine modification. The ETS DNA-binding region spans 362–442 (IQLWQFLLEL…SGKRYVYRFV (81 aa)).

The protein belongs to the ETS family. In terms of processing, phosphorylation by CDK10 at Ser-220 and Ser-225 creates a phosphodegron that targets ETS2 for proteasomal degradation.

Its subcellular location is the nucleus. Its function is as follows. Transcription factor activating transcription. Binds specifically the GGA DNA motif in gene promoters and stimulates transcription of those genes. The chain is Protein C-ets-2 (Ets2) from Mus musculus (Mouse).